Here is a 304-residue protein sequence, read N- to C-terminus: uncharacterized protein (304 aa).

NAD(+) is bound by residues 136-137 (GI), 215-217 (VGR), and D241. R217 is a catalytic residue. E246 is a catalytic residue. Residue H265 is the Proton donor of the active site. Position 265–268 (265–268 (HTAN)) interacts with NAD(+).

Belongs to the D-isomer specific 2-hydroxyacid dehydrogenase family.

This is an uncharacterized protein from Corynebacterium melassecola.